The chain runs to 499 residues: Maturase K (499 aa).

It belongs to the intron maturase 2 family. MatK subfamily.

It localises to the plastid. Its subcellular location is the chloroplast. Its function is as follows. Usually encoded in the trnK tRNA gene intron. Probably assists in splicing its own and other chloroplast group II introns. This Ceratozamia mexicana (Mexican horncone) protein is Maturase K.